Reading from the N-terminus, the 187-residue chain is Early nodulin-55-2 (187 aa).

The N-terminal stretch at 1 to 26 is a signal peptide; sequence MASCLPNASPFLVMLAMCLLISTSEA. The Phytocyanin domain maps to 27-132; it reads EKYVVGGSEK…GLKLAVLVIS (106 aa). N-linked (GlcNAc...) asparagine glycosylation is found at asparagine 78, asparagine 116, and asparagine 134. The cysteines at positions 85 and 120 are disulfide-linked. A disordered region spans residues 138 to 167; the sequence is KNLLSPSPSPSPPPSSLLSPSPSPLPNNQG. The segment covering 144–162 has biased composition (pro residues); the sequence is SPSPSPPPSSLLSPSPSPL.

The protein belongs to the early nodulin-like (ENODL) family.

It is found in the symbiosome. The protein resides in the peribacteroid membrane. Functionally, may act as a carbohydrate transporter. This Glycine max (Soybean) protein is Early nodulin-55-2.